A 95-amino-acid chain; its full sequence is Large ribosomal subunit protein bL25 (95 aa).

It belongs to the bacterial ribosomal protein bL25 family. In terms of assembly, part of the 50S ribosomal subunit; part of the 5S rRNA/L5/L18/L25 subcomplex. Contacts the 5S rRNA. Binds to the 5S rRNA independently of L5 and L18.

Functionally, this is one of the proteins that binds to the 5S RNA in the ribosome where it forms part of the central protuberance. In Buchnera aphidicola subsp. Acyrthosiphon pisum (strain 5A), this protein is Large ribosomal subunit protein bL25.